A 90-amino-acid polypeptide reads, in one-letter code: DNA-binding protein HU-beta (90 aa).

The protein belongs to the bacterial histone-like protein family. As to quaternary structure, heterodimer of an alpha and a beta chain.

In terms of biological role, histone-like DNA-binding protein which is capable of wrapping DNA to stabilize it, and thus to prevent its denaturation under extreme environmental conditions. In Escherichia coli O6:H1 (strain CFT073 / ATCC 700928 / UPEC), this protein is DNA-binding protein HU-beta (hupB).